The primary structure comprises 417 residues: Tryptophan synthase beta chain (417 aa).

Lys108 carries the N6-(pyridoxal phosphate)lysine modification.

This sequence belongs to the TrpB family. Tetramer of two alpha and two beta chains. Pyridoxal 5'-phosphate is required as a cofactor.

The enzyme catalyses (1S,2R)-1-C-(indol-3-yl)glycerol 3-phosphate + L-serine = D-glyceraldehyde 3-phosphate + L-tryptophan + H2O. It participates in amino-acid biosynthesis; L-tryptophan biosynthesis; L-tryptophan from chorismate: step 5/5. Functionally, the beta subunit is responsible for the synthesis of L-tryptophan from indole and L-serine. The sequence is that of Tryptophan synthase beta chain (trpB) from Mycobacterium leprae (strain TN).